We begin with the raw amino-acid sequence, 378 residues long: Protein RecA (378 aa).

Residue G79–T86 participates in ATP binding.

It belongs to the RecA family.

The protein resides in the cytoplasm. Functionally, can catalyze the hydrolysis of ATP in the presence of single-stranded DNA, the ATP-dependent uptake of single-stranded DNA by duplex DNA, and the ATP-dependent hybridization of homologous single-stranded DNAs. It interacts with LexA causing its activation and leading to its autocatalytic cleavage. This is Protein RecA from Streptococcus pyogenes serotype M2 (strain MGAS10270).